The primary structure comprises 150 residues: FAD synthase (150 aa).

ATP is bound by residues 16–17 (VF), 21–24 (HVGH), and Asp-102.

Belongs to the archaeal FAD synthase family. Homodimer. The cofactor is a divalent metal cation.

It carries out the reaction FMN + ATP + H(+) = FAD + diphosphate. It functions in the pathway cofactor biosynthesis; FAD biosynthesis; FAD from FMN: step 1/1. Catalyzes the transfer of the AMP portion of ATP to flavin mononucleotide (FMN) to produce flavin adenine dinucleotide (FAD) coenzyme. This chain is FAD synthase, found in Thermococcus onnurineus (strain NA1).